A 167-amino-acid chain; its full sequence is Small ribosomal subunit protein uS3m (167 aa).

A mitochondrion-targeting transit peptide spans 1–35; that stretch reads MAWSASVRGLGQRVLACSRELPGAWRTLHTSAVCA.

Belongs to the universal ribosomal protein uS3 family. In terms of assembly, component of the mitochondrial ribosome small subunit (28S) which comprises a 12S rRNA and about 30 distinct proteins.

Its subcellular location is the mitochondrion. The polypeptide is Small ribosomal subunit protein uS3m (Mrps24) (Mus musculus (Mouse)).